The chain runs to 366 residues: UDP-N-acetylglucosamine 2-epimerase (366 aa).

The active site involves His-206.

The protein belongs to the UDP-N-acetylglucosamine 2-epimerase family. As to quaternary structure, homodimer.

It localises to the cytoplasm. It carries out the reaction UDP-N-acetyl-alpha-D-glucosamine = UDP-N-acetyl-alpha-D-mannosamine. Its function is as follows. Catalyzes the reversible epimerization at C-2 of UDP-N-acetylglucosamine (UDP-GlcNAc) to produce UDP-N-acetylmannosamine (UDP-ManNAc), the activated donor of ManNAc residues. This Methanococcus maripaludis (strain DSM 14266 / JCM 13030 / NBRC 101832 / S2 / LL) protein is UDP-N-acetylglucosamine 2-epimerase (wecB).